The sequence spans 472 residues: Ribosomal protein uS12 methylthiotransferase RimO (472 aa).

The region spanning 33–143 (NRIGFVSLGC…VLKHVHKYVP (111 aa)) is the MTTase N-terminal domain. 6 residues coordinate [4Fe-4S] cluster: cysteine 42, cysteine 78, cysteine 107, cysteine 175, cysteine 179, and cysteine 182. The region spanning 161 to 398 (LTPKHYAYLK…MELQAEISAE (238 aa)) is the Radical SAM core domain. In terms of domain architecture, TRAM spans 401–467 (ARFVGRTLDI…EHDLWAEVVD (67 aa)).

This sequence belongs to the methylthiotransferase family. RimO subfamily. [4Fe-4S] cluster serves as cofactor.

Its subcellular location is the cytoplasm. The catalysed reaction is L-aspartate(89)-[ribosomal protein uS12]-hydrogen + (sulfur carrier)-SH + AH2 + 2 S-adenosyl-L-methionine = 3-methylsulfanyl-L-aspartate(89)-[ribosomal protein uS12]-hydrogen + (sulfur carrier)-H + 5'-deoxyadenosine + L-methionine + A + S-adenosyl-L-homocysteine + 2 H(+). Its function is as follows. Catalyzes the methylthiolation of an aspartic acid residue of ribosomal protein uS12. The sequence is that of Ribosomal protein uS12 methylthiotransferase RimO from Shewanella putrefaciens (strain CN-32 / ATCC BAA-453).